The primary structure comprises 139 residues: Immunogenic miracidial antigen 8I (139 aa).

Positions 61–139 (IDVGDEDYHD…PKKYGSGYKH (79 aa)) are disordered. Residues 64–85 (GDEDYHDGDDDVDYTDDVDDVD) are compositionally biased toward acidic residues. The segment covering 90-103 (SPSQLLQGGYQRNQ) has biased composition (polar residues).

It belongs to the immunogenic miracidial antigen family.

The sequence is that of Immunogenic miracidial antigen 8I (8I) from Schistosoma japonicum (Blood fluke).